The chain runs to 352 residues: MRVAVDVMGGDNAPHVEVEGAVAAAREFGVPVTLVGDVEKVRAELARHDCKGLDIEVWHASEVVGMHDSASDAVRKKKDSSIRVAFELVKGGEAVAVVSAGNSGATMAAGMFVLKRMKGIDRAAIAQLFPTVSGKTLVLDVGGNVDCKPIHLVQFAVMGEVYARFVMGVDNPKVGLLSNGEEASKGNELTRETSALLREKPINYIGYVEGRDIFNGSVDVVVCDGFVGNVALKLSEGLAEAVGKMLKAEIKSSFLSQIGYLLSRKAFNNFKKTVDYAEYGGAPLLGINGVGMICHGGSNPKAIKNAIRFAHEYALKGVNGRMAEKLNESFPGDAREREGAQAPDAGTERVAS.

Positions 328–339 are enriched in basic and acidic residues; sequence ESFPGDAREREG. The interval 328-352 is disordered; it reads ESFPGDAREREGAQAPDAGTERVAS.

The protein belongs to the PlsX family. In terms of assembly, homodimer. Probably interacts with PlsY.

It localises to the cytoplasm. It carries out the reaction a fatty acyl-[ACP] + phosphate = an acyl phosphate + holo-[ACP]. The protein operates within lipid metabolism; phospholipid metabolism. Its function is as follows. Catalyzes the reversible formation of acyl-phosphate (acyl-PO(4)) from acyl-[acyl-carrier-protein] (acyl-ACP). This enzyme utilizes acyl-ACP as fatty acyl donor, but not acyl-CoA. This Geobacter sp. (strain M21) protein is Phosphate acyltransferase.